We begin with the raw amino-acid sequence, 299 residues long: Lipoyl synthase (299 aa).

Residues Cys-45, Cys-50, Cys-56, Cys-71, Cys-75, Cys-78, and Ser-284 each coordinate [4Fe-4S] cluster. The 217-residue stretch at 57–273 (YSKGTATFMI…GDVALAKDFL (217 aa)) folds into the Radical SAM core domain.

The protein belongs to the radical SAM superfamily. Lipoyl synthase family. It depends on [4Fe-4S] cluster as a cofactor.

It localises to the cytoplasm. It carries out the reaction [[Fe-S] cluster scaffold protein carrying a second [4Fe-4S](2+) cluster] + N(6)-octanoyl-L-lysyl-[protein] + 2 oxidized [2Fe-2S]-[ferredoxin] + 2 S-adenosyl-L-methionine + 4 H(+) = [[Fe-S] cluster scaffold protein] + N(6)-[(R)-dihydrolipoyl]-L-lysyl-[protein] + 4 Fe(3+) + 2 hydrogen sulfide + 2 5'-deoxyadenosine + 2 L-methionine + 2 reduced [2Fe-2S]-[ferredoxin]. It participates in protein modification; protein lipoylation via endogenous pathway; protein N(6)-(lipoyl)lysine from octanoyl-[acyl-carrier-protein]: step 2/2. In terms of biological role, catalyzes the radical-mediated insertion of two sulfur atoms into the C-6 and C-8 positions of the octanoyl moiety bound to the lipoyl domains of lipoate-dependent enzymes, thereby converting the octanoylated domains into lipoylated derivatives. The polypeptide is Lipoyl synthase (Desulfotalea psychrophila (strain LSv54 / DSM 12343)).